A 297-amino-acid polypeptide reads, in one-letter code: uncharacterized protein (297 aa).

Over residues 1–12 (MASYSFQFSTDA) the composition is skewed to polar residues. Residues 1–21 (MASYSFQFSTDATGKPGAAKP) are disordered.

To B.subtilis XkdY/XepA.

This is an uncharacterized protein from Bacillus subtilis (strain 168).